Reading from the N-terminus, the 158-residue chain is Phosphopantetheine adenylyltransferase (158 aa).

Thr-9 provides a ligand contact to substrate. ATP-binding positions include 9 to 10 (TF) and His-17. Residues Lys-41, Leu-73, and Arg-87 each contribute to the substrate site. Residues 88–90 (GVR), Glu-98, and 123–129 (WSYVSST) contribute to the ATP site.

This sequence belongs to the bacterial CoaD family. As to quaternary structure, homohexamer. It depends on Mg(2+) as a cofactor.

The protein localises to the cytoplasm. It catalyses the reaction (R)-4'-phosphopantetheine + ATP + H(+) = 3'-dephospho-CoA + diphosphate. It functions in the pathway cofactor biosynthesis; coenzyme A biosynthesis; CoA from (R)-pantothenate: step 4/5. Functionally, reversibly transfers an adenylyl group from ATP to 4'-phosphopantetheine, yielding dephospho-CoA (dPCoA) and pyrophosphate. The protein is Phosphopantetheine adenylyltransferase of Histophilus somni (strain 2336) (Haemophilus somnus).